A 260-amino-acid polypeptide reads, in one-letter code: Translation initiation factor 2 subunit alpha (260 aa).

In terms of domain architecture, S1 motif spans 12–83; sequence GDLIVGTVHK…KKGHVDASLK (72 aa).

The protein belongs to the eIF-2-alpha family. As to quaternary structure, heterotrimer composed of an alpha, a beta and a gamma chain.

EIF-2 functions in the early steps of protein synthesis by forming a ternary complex with GTP and initiator tRNA. This chain is Translation initiation factor 2 subunit alpha, found in Methanosphaera stadtmanae (strain ATCC 43021 / DSM 3091 / JCM 11832 / MCB-3).